A 560-amino-acid polypeptide reads, in one-letter code: DNA ligase B (560 aa).

Lys124 serves as the catalytic N6-AMP-lysine intermediate.

This sequence belongs to the NAD-dependent DNA ligase family. LigB subfamily.

The catalysed reaction is NAD(+) + (deoxyribonucleotide)n-3'-hydroxyl + 5'-phospho-(deoxyribonucleotide)m = (deoxyribonucleotide)n+m + AMP + beta-nicotinamide D-nucleotide.. Functionally, catalyzes the formation of phosphodiester linkages between 5'-phosphoryl and 3'-hydroxyl groups in double-stranded DNA using NAD as a coenzyme and as the energy source for the reaction. This chain is DNA ligase B, found in Escherichia coli O81 (strain ED1a).